Here is a 208-residue protein sequence, read N- to C-terminus: MVNKRMQTLLMQLRQQGIQDERLLQALEAVPRERFVDEALSHKAYENTALPIGSGQTISQPYMVARMTELLQLTPTSRVLEIGTGSGYQTAILAHLVEHVCSVERIKGLQWQAKRRLKQLDLHNVSTRHGDGWLGWASRGPFDAIIVTAAPPEIPNALLEQLDEGGILVLPVGEQAQTLKCVQRRNNEFKVETVEAVRFVPLVKGELA.

The active site involves Ser59.

This sequence belongs to the methyltransferase superfamily. L-isoaspartyl/D-aspartyl protein methyltransferase family.

The protein localises to the cytoplasm. The catalysed reaction is [protein]-L-isoaspartate + S-adenosyl-L-methionine = [protein]-L-isoaspartate alpha-methyl ester + S-adenosyl-L-homocysteine. In terms of biological role, catalyzes the methyl esterification of L-isoaspartyl residues in peptides and proteins that result from spontaneous decomposition of normal L-aspartyl and L-asparaginyl residues. It plays a role in the repair and/or degradation of damaged proteins. This is Protein-L-isoaspartate O-methyltransferase from Yersinia enterocolitica serotype O:8 / biotype 1B (strain NCTC 13174 / 8081).